A 416-amino-acid polypeptide reads, in one-letter code: uncharacterized protein (416 aa).

Helical transmembrane passes span 5-25, 84-104, 128-148, 160-180, 192-212, 237-257, 263-283, 288-308, and 312-332; these read LFLI…ILSL, ISGL…LKHV, AYVP…LFSI, LAFL…YLLW, VLLF…KFGF, PIYF…PVFL, FDKR…FYSL, LHHY…FYLT, and IKYA…GVYI.

It belongs to the glycosyltransferase 83 family.

The protein resides in the cell membrane. This is an uncharacterized protein from Aquifex aeolicus (strain VF5).